The chain runs to 154 residues: MSVTLDLQLASASTDGLPSEAQLQGWLDGTILGFQQEAEVTVRIVDEAESNELNLTYRGKDKPTNVLSFPFEAPPGLELPLLGDLVICRQVVEREAAEQGKPLMAHWAHMVVHGSLHLLGYDHIEDDEAEEMETLERDIMQELGFADPYLNDEE.

Residues His-113, His-117, and His-123 each coordinate Zn(2+).

This sequence belongs to the endoribonuclease YbeY family. Zn(2+) serves as cofactor.

The protein resides in the cytoplasm. Functionally, single strand-specific metallo-endoribonuclease involved in late-stage 70S ribosome quality control and in maturation of the 3' terminus of the 16S rRNA. The sequence is that of Endoribonuclease YbeY from Aeromonas hydrophila subsp. hydrophila (strain ATCC 7966 / DSM 30187 / BCRC 13018 / CCUG 14551 / JCM 1027 / KCTC 2358 / NCIMB 9240 / NCTC 8049).